The primary structure comprises 1247 residues: Protein jagged-2 (1247 aa).

Positions 1–23 (MRARGWGRLPRRLLLLLVLCVQA) are cleaved as a signal peptide. Residues 24–1082 (TRPMGYFELQ…ETVVMGGSST (1059 aa)) lie on the Extracellular side of the membrane. An N-linked (GlcNAc...) asparagine glycan is attached at N153. Residues 196-240 (VRCDENYYSATCNKFCRPRNDFFGHYTCDQYGNKACMDGWMGKEC) form the DSL domain. Cystine bridges form between C198/C207, C211/C223, C231/C240, C245/C256, C249/C262, C264/C273, C276/C287, C282/C293, C295/C304, C311/C323, C317/C333, C335/C344, C351/C362, C356/C371, C373/C382, C389/C400, C394/C409, C411/C420, C427/C438, C432/C447, C449/C458, C465/C475, C469/C484, C486/C495, C502/C513, C507/C522, C524/C533, C540/C551, C545/C560, C562/C571, C589/C612, C606/C622, C624/C633, C640/C651, C645/C660, C662/C671, C678/C689, C683/C698, C700/C709, C716/C727, C721/C736, and C738/C747. An EGF-like 1 domain is found at 241–274 (KEAVCKQGCNLLHGGCTVPGECRCSYGWQGKFCD). The region spanning 275–305 (ECVPYPGCVHGSCVEPWHCDCETNWGGLLCD) is the EGF-like 2; atypical domain. EGF-like domains lie at 307–345 (DLNYCGSHHPCVNGGTCINAEPDQYLCACPDGYLGKNCE) and 347–383 (AEHACASNPCANGGSCHEVPSGFECHCPSGWNGPTCA). The EGF-like 5; calcium-binding domain maps to 385 to 421 (DIDECASNPCAAGGTCVDQVDGFECICPEQWVGATCQ). In terms of domain architecture, EGF-like 6; calcium-binding spans 423 to 459 (DANECEGKPCLNAFSCKNLIGGYYCDCLPGWKGINCQ). Positions 461 to 496 (NINDCHGQCQHGGTCKDLVNGYQCVCPRGFGGRHCE) constitute an EGF-like 7; calcium-binding domain. 2 EGF-like domains span residues 498 to 534 (EYDKCASSPCRRGGICEDLVDGFRCHCPRGLSGLHCE) and 536 to 572 (DMDLCEPSPCLNGARCYNLEGDYYCACPEDFGGKNCS). A glycan (N-linked (GlcNAc...) asparagine) is linked at N570. One can recognise an EGF-like 10; atypical domain in the interval 574 to 634 (PRDTCPGGAC…DSGFTGTYCH (61 aa)). N619 carries N-linked (GlcNAc...) asparagine glycosylation. An EGF-like 11; calcium-binding domain is found at 636–672 (NIDDCMGQPCRNGGTCIDEVDSFRCFCPSGWEGELCD). One can recognise an EGF-like 12; calcium-binding domain in the interval 674–710 (NPNDCLPDPCHSRGRCYDLVNDFYCACDDGWKGKTCH). EGF-like domains are found at residues 712 to 748 (REFQCDAYTCSNGGTCYDSGDTFRCACPPGWKGSTCT) and 751 to 787 (KNSSCVPNPCVNGGTCVGSGDSFSCICRDGWEGRTCT). The N-linked (GlcNAc...) asparagine glycan is linked to N752. 9 cysteine pairs are disulfide-bonded: C755-C766, C760-C775, C777-C786, C793-C804, C798-C813, C815-C824, C831-C842, C836-C851, and C853-C862. The EGF-like 15; calcium-binding domain occupies 789–825 (NTNDCNPLPCYNGGICVDGVNWFRCECAPGFAGPDCR). The region spanning 827–863 (NIDECQSSPCAYGATCVDEINGYRCSCPPGRSGPRCQ) is the EGF-like 16; calcium-binding domain. N1060 carries N-linked (GlcNAc...) asparagine glycosylation. Residues 1083-1103 (GLLVPVLCSVFSVLWLACVVI) form a helical membrane-spanning segment. Topologically, residues 1104-1247 (CVWWTRKRRK…TKDVRRAGRE (144 aa)) are cytoplasmic. Basic and acidic residues-rich tracts occupy residues 1115–1125 (RERSRLPRDES), 1192–1212 (LSRGDGDSPEAEKFISHKFTK), and 1230–1247 (VDNRAVRSTKDVRRAGRE). Disordered regions lie at residues 1115–1148 (RERSRLPRDESANNQWAPLNPIRNPIERPGGSGL) and 1167–1247 (PRRA…AGRE). Residue S1125 is modified to Phosphoserine.

In terms of tissue distribution, found to be highest in fetal thymus, epidermis, foregut dorsal root ganglia and inner ear. In 2-weeK-old mice, abundant in heart, lung, thymus, skeletal muscle, brain and testis. Expression overlaps partially with Notch1 expression.

The protein resides in the membrane. Putative Notch ligand involved in the mediation of Notch signaling. Plays an essential role during limb, craniofacial and thymic development. May be involved in myogenesis and in the development of peripheral and central nervous systems. This is Protein jagged-2 (Jag2) from Mus musculus (Mouse).